Here is a 28-residue protein sequence, read N- to C-terminus: Cysteine-rich venom protein asurin-2 (28 aa).

Residues Ser-1–Asn-15 show a composition bias toward basic and acidic residues. Residues Ser-1–Met-28 form a disordered region. The segment covering Leu-17–Met-28 has biased composition (polar residues).

The protein belongs to the CRISP family. Post-translationally, contains 8 disulfide bonds. As to expression, expressed by the venom gland.

The protein localises to the secreted. Blocks contraction of smooth muscle elicited by high potassium-induced depolarization, but does not block caffeine-stimulated contraction. May target voltage-gated calcium channels on smooth muscle. This Austrelaps superbus (Lowland copperhead snake) protein is Cysteine-rich venom protein asurin-2.